Here is a 156-residue protein sequence, read N- to C-terminus: Ribosomal RNA large subunit methyltransferase H (156 aa).

Residues Leu72, Gly104, and Leu123–Leu128 each bind S-adenosyl-L-methionine.

This sequence belongs to the RNA methyltransferase RlmH family. As to quaternary structure, homodimer.

It localises to the cytoplasm. It catalyses the reaction pseudouridine(1915) in 23S rRNA + S-adenosyl-L-methionine = N(3)-methylpseudouridine(1915) in 23S rRNA + S-adenosyl-L-homocysteine + H(+). Specifically methylates the pseudouridine at position 1915 (m3Psi1915) in 23S rRNA. The chain is Ribosomal RNA large subunit methyltransferase H from Syntrophotalea carbinolica (strain DSM 2380 / NBRC 103641 / GraBd1) (Pelobacter carbinolicus).